Here is a 174-residue protein sequence, read N- to C-terminus: RNA pyrophosphohydrolase (174 aa).

Residues 6-149 (GFRANVGIVI…KREVYRRAMK (144 aa)) form the Nudix hydrolase domain. A Nudix box motif is present at residues 38 to 59 (GGIDEGETAEQTMYRELYEEVG).

This sequence belongs to the Nudix hydrolase family. RppH subfamily. It depends on a divalent metal cation as a cofactor.

Its function is as follows. Accelerates the degradation of transcripts by removing pyrophosphate from the 5'-end of triphosphorylated RNA, leading to a more labile monophosphorylated state that can stimulate subsequent ribonuclease cleavage. In Pseudoalteromonas atlantica (strain T6c / ATCC BAA-1087), this protein is RNA pyrophosphohydrolase.